Here is a 388-residue protein sequence, read N- to C-terminus: Acyl-CoA dehydrogenase fadE12 (388 aa).

Belongs to the acyl-CoA dehydrogenase family. FAD serves as cofactor.

It catalyses the reaction a 2,3-saturated acyl-CoA + A = a 2,3-dehydroacyl-CoA + AH2. The sequence is that of Acyl-CoA dehydrogenase fadE12 (fadE12) from Mycobacterium tuberculosis (strain CDC 1551 / Oshkosh).